The following is a 984-amino-acid chain: Ephrin type-B receptor 1 (984 aa).

Residues M1–A17 form the signal peptide. Residues M18–P540 are Extracellular-facing. The region spanning E19 to Q201 is the Eph LBD domain. 2 consecutive Fibronectin type-III domains span residues V322–A432 and A433–D528. N-linked (GlcNAc...) asparagine glycans are attached at residues N334, N426, and N480. Residues L541–C563 form a helical membrane-spanning segment. At S564 to A984 the chain is on the cytoplasmic side. A Phosphotyrosine modification is found at Y600. The Protein kinase domain maps to V619–I882. Residues I625–V633 and K651 contribute to the ATP site. D744 functions as the Proton acceptor in the catalytic mechanism. Residues T911–Q975 enclose the SAM domain. Y928 is subject to Phosphotyrosine; by autocatalysis. Positions V982 to A984 match the PDZ-binding motif.

It belongs to the protein kinase superfamily. Tyr protein kinase family. Ephrin receptor subfamily. Heterotetramer upon binding of the ligand. The heterotetramer is composed of an ephrin dimer and a receptor dimer. Oligomerization is probably required to induce biological responses. Interacts with EPHB6; transphosphorylates EPHB6 to form an active signaling complex. Interacts with PICK1. Interacts (through Tyr-594) with NCK1 (via SH2 domain); activates the JUN cascade to regulate cell adhesion. The ligand-activated form interacts (through Tyr-928) with GRB7 and GRB10 (via SH2 domains). The ligand-activated form interacts (residues within the catalytic domain) with GRB2 (via SH2 domain). Interacts with GRB2, SHC1 and SRC; activates the MAPK/ERK cascade to regulate cell migration. Interacts with CBL; regulates receptor degradation through ubiquitination. Interacts with ACP1. In terms of processing, phosphorylated. Autophosphorylation is stimulated by the ligand EFNB1. Required for interaction with SH2 domain-containing interactors, for activation of the MAPK/ERK and JUN signaling cascades and for ubiquitination by CBL. Post-translationally, ubiquitinated; (EFNB1)ligand-induced poly- and/or multi-ubiquitination by CBL is regulated by SRC and leads to lysosomal degradation. As to expression, restricted to brain and testes.

Its subcellular location is the cell membrane. It localises to the early endosome membrane. It is found in the cell projection. The protein resides in the dendrite. The enzyme catalyses L-tyrosyl-[protein] + ATP = O-phospho-L-tyrosyl-[protein] + ADP + H(+). Functionally, receptor tyrosine kinase which binds promiscuously transmembrane ephrin-B family ligands residing on adjacent cells, leading to contact-dependent bidirectional signaling into neighboring cells. The signaling pathway downstream of the receptor is referred to as forward signaling while the signaling pathway downstream of the ephrin ligand is referred to as reverse signaling. Cognate/functional ephrin ligands for this receptor include EFNB1, EFNB2 and EFNB3. During nervous system development, regulates retinal axon guidance redirecting ipsilaterally ventrotemporal retinal ganglion cells axons at the optic chiasm midline. This probably requires repulsive interaction with EFNB2. In the adult nervous system together with EFNB3, regulates chemotaxis, proliferation and polarity of the hippocampus neural progenitors. In addition to its role in axon guidance also plays an important redundant role with other ephrin-B receptors in development and maturation of dendritic spines and synapse formation. May also regulate angiogenesis. More generally, may play a role in targeted cell migration and adhesion. Upon activation by EFNB1 and probably other ephrin-B ligands activates the MAPK/ERK and the JNK signaling cascades to regulate cell migration and adhesion respectively. Involved in the maintenance of the pool of satellite cells (muscle stem cells) by promoting their self-renewal and reducing their activation and differentiation. This chain is Ephrin type-B receptor 1 (Ephb1), found in Rattus norvegicus (Rat).